Here is a 26-residue protein sequence, read N- to C-terminus: Hemocyanin subunit 3 (26 aa).

It belongs to the tyrosinase family. Hemocyanin subfamily. Hemolymph.

It localises to the secreted. The protein resides in the extracellular space. Functionally, hemocyanins are copper-containing oxygen carriers occurring freely dissolved in the hemolymph of many mollusks and arthropods. The chain is Hemocyanin subunit 3 from Homarus americanus (American lobster).